The primary structure comprises 1505 residues: Probable serine/threonine-protein kinase DDB_G0280133 (1505 aa).

PAS domains lie at 2–72 (NTHN…FETG), 108–178 (RMFI…YHGG), and 215–284 (DMFK…TDSH). 2 disordered regions span residues 282 to 348 (DSHD…FNHS) and 398 to 533 (RVYG…ESSY). 2 stretches are compositionally biased toward low complexity: residues 289–314 (QQQQ…TTST) and 328–344 (SSPP…TPTT). Basic and acidic residues-rich tracts occupy residues 398–407 (RVYGKDKDKN) and 415–430 (ENKD…ESKE). The segment covering 431-443 (HRHSKEKKKRKKD) has biased composition (basic residues). The span at 448–468 (NNNNNNNNNNNNNNEQTSDSS) shows a compositional bias: low complexity. A compositionally biased stretch (basic residues) spans 479–489 (SKKKRSSKKKS). A compositionally biased stretch (low complexity) spans 515-532 (SSNSSSNSSHSNAPHESS). Residues 542–805 (YTLGKTLGRG…IMNVLNHPWL (264 aa)) form the Protein kinase domain. Residues 548–556 (LGRGNYGVV) and K571 contribute to the ATP site. D684 acts as the Proton acceptor in catalysis. Over residues 855–960 (NILNNNNNNN…NNTNSIINNN (106 aa)) the composition is skewed to low complexity. Disordered regions lie at residues 855-1048 (NILN…SHQQ), 1072-1091 (QPNQ…QLQQ), and 1181-1358 (QQQQ…DEEN). Residues 903–939 (NNNNNINNNINNNNNVNNNVNNNKNNNNNNNNNSNNN) adopt a coiled-coil conformation. Over residues 961–974 (LYNQSLSPQNNNIY) the composition is skewed to polar residues. 2 stretches are compositionally biased toward low complexity: residues 975–1013 (QHSP…QQQH) and 1022–1048 (QQHQ…SHQQ). A compositionally biased stretch (polar residues) spans 1072–1082 (QPNQQVSFDTN). A coiled-coil region spans residues 1125 to 1189 (IQQIQQLQQQ…QQQQQQQQND (65 aa)). A compositionally biased stretch (basic and acidic residues) spans 1202-1271 (SKRDNSYNKR…NSRDNNRYNN (70 aa)). Positions 1272–1282 (RDNNNNNNSNN) are enriched in low complexity. Basic and acidic residues-rich tracts occupy residues 1283 to 1301 (NRER…DYGK) and 1313 to 1326 (NKDK…KPDF). A compositionally biased stretch (polar residues) spans 1331-1347 (SLKNDSSSNYGTISSGR). The region spanning 1399 to 1463 (FLFGRNRDIA…NGTFLKGEKI (65 aa)) is the FHA domain.

The protein belongs to the protein kinase superfamily. CAMK Ser/Thr protein kinase family. SNF1 subfamily.

It catalyses the reaction L-seryl-[protein] + ATP = O-phospho-L-seryl-[protein] + ADP + H(+). The enzyme catalyses L-threonyl-[protein] + ATP = O-phospho-L-threonyl-[protein] + ADP + H(+). In Dictyostelium discoideum (Social amoeba), this protein is Probable serine/threonine-protein kinase DDB_G0280133.